The chain runs to 250 residues: 5'-nucleotidase SurE (250 aa).

Positions 8, 9, 39, and 95 each coordinate a divalent metal cation.

This sequence belongs to the SurE nucleotidase family. The cofactor is a divalent metal cation.

The protein resides in the cytoplasm. It catalyses the reaction a ribonucleoside 5'-phosphate + H2O = a ribonucleoside + phosphate. In terms of biological role, nucleotidase that shows phosphatase activity on nucleoside 5'-monophosphates. This Cupriavidus taiwanensis (strain DSM 17343 / BCRC 17206 / CCUG 44338 / CIP 107171 / LMG 19424 / R1) (Ralstonia taiwanensis (strain LMG 19424)) protein is 5'-nucleotidase SurE.